Consider the following 290-residue polypeptide: Cilia- and flagella-associated protein 298 (290 aa).

Y264 is modified (phosphotyrosine).

Belongs to the CFAP298 family. Interacts with ZMYND10.

The protein localises to the cytoplasm. The protein resides in the cytoskeleton. It is found in the cilium basal body. Its function is as follows. Plays a role in motile cilium function, possibly by acting on outer dynein arm assembly. Seems to be important for initiation rather than maintenance of cilium motility. Required for correct positioning of the cilium at the apical cell surface, suggesting an additional role in the planar cell polarity (PCP) pathway. May suppress canonical Wnt signaling activity. This is Cilia- and flagella-associated protein 298 from Homo sapiens (Human).